The chain runs to 439 residues: tRNA-2-methylthio-N(6)-dimethylallyladenosine synthase (439 aa).

The MTTase N-terminal domain occupies 2–115 (KGLYIKTYGC…LPELIVKASR (114 aa)). [4Fe-4S] cluster contacts are provided by cysteine 11, cysteine 47, cysteine 78, cysteine 155, cysteine 159, and cysteine 162. The 232-residue stretch at 141–372 (NSQGSSAFLA…QKLISKQQLE (232 aa)) folds into the Radical SAM core domain. The TRAM domain maps to 375–439 (QSMVGKTIPV…QSSLLGCAFH (65 aa)).

The protein belongs to the methylthiotransferase family. MiaB subfamily. Monomer. [4Fe-4S] cluster is required as a cofactor.

It localises to the cytoplasm. It catalyses the reaction N(6)-dimethylallyladenosine(37) in tRNA + (sulfur carrier)-SH + AH2 + 2 S-adenosyl-L-methionine = 2-methylsulfanyl-N(6)-dimethylallyladenosine(37) in tRNA + (sulfur carrier)-H + 5'-deoxyadenosine + L-methionine + A + S-adenosyl-L-homocysteine + 2 H(+). Functionally, catalyzes the methylthiolation of N6-(dimethylallyl)adenosine (i(6)A), leading to the formation of 2-methylthio-N6-(dimethylallyl)adenosine (ms(2)i(6)A) at position 37 in tRNAs that read codons beginning with uridine. The protein is tRNA-2-methylthio-N(6)-dimethylallyladenosine synthase of Wolbachia pipientis wMel.